We begin with the raw amino-acid sequence, 340 residues long: Thylakoidal processing peptidase 1, chloroplastic (340 aa).

The transit peptide at 1-52 directs the protein to the chloroplast; the sequence is MAIRITFTYSTHVARNLVGTRVGPGGYCFESLVRPRFFSHKRDFDRSPRNRP. A helical membrane pass occupies residues 155–175; it reads EDAKAAFTAVTVSILFRSALA. The Lumenal, thylakoid portion of the chain corresponds to 176–340; sequence EPKSIPSTSM…AITRGPVAVS (165 aa). Ser184 is a catalytic residue.

It belongs to the peptidase S26 family.

The protein resides in the plastid. It is found in the chloroplast thylakoid membrane. It catalyses the reaction Cleavage of hydrophobic, N-terminal signal or leader sequences from secreted and periplasmic proteins.. Functionally, cleaves the thylakoid-transfer domain from a chloroplast protein. This is Thylakoidal processing peptidase 1, chloroplastic (TPP1) from Arabidopsis thaliana (Mouse-ear cress).